The sequence spans 397 residues: Purine ribonucleoside efflux pump NepI (397 aa).

Residues 1-21 (MNENIAEKFRADGVARPNWSA) lie on the Cytoplasmic side of the membrane. The chain crosses the membrane as a helical span at residues 22-42 (VFAVAFCVACLITVEFLPVSL). Residues 43–54 (LTPMAQDLGISE) lie on the Periplasmic side of the membrane. A helical membrane pass occupies residues 55–75 (GIAGQSVTVTAFVAMFSSLFI). The Cytoplasmic portion of the chain corresponds to 76–85 (TQIIQATDRR). The chain crosses the membrane as a helical span at residues 86 to 106 (YIVILFAVLLTASCLMVSFAN). Position 107 (Ser-107) is a topological domain, periplasmic. The helical transmembrane segment at 108 to 128 (FTLLLLGRACLGLALGGFWAM) threads the bilayer. Topologically, residues 129–147 (SASLTMRLVPARTVPKALS) are cytoplasmic. The helical transmembrane segment at 148 to 168 (VIFGAVSIALVIAAPLGSFLG) threads the bilayer. Over 169–175 (GIIGWRN) the chain is Periplasmic. Residues 176-196 (VFNAAAVMGVLCVIWVVKSLP) form a helical membrane-spanning segment. The Cytoplasmic segment spans residues 197–215 (SLPGEPSHQKQNMFSLLQR). The helical transmembrane segment at 216–236 (PGVMAGMIAIFMSFAGQFAFF) threads the bilayer. The Periplasmic segment spans residues 237–255 (TYIRPVYMNLAGFDVDGLT). The helical transmembrane segment at 256–276 (LVLLSFGIASFVGTSFSSYVL) threads the bilayer. Over 277–281 (KRSVK) the chain is Cytoplasmic. Residues 282–302 (LALAGAPLLLALSALTLIVWG) traverse the membrane as a helical segment. The Periplasmic portion of the chain corresponds to 303–305 (SDK). The chain crosses the membrane as a helical span at residues 306–326 (TVAAVIAIIWGLAFALVPVGW). The Cytoplasmic portion of the chain corresponds to 327 to 343 (STWITRSLADQAEKAGS). A helical membrane pass occupies residues 344–364 (IQVAVIQLANTCGAAVGGYAL). The Periplasmic portion of the chain corresponds to 365-366 (DN). Residues 367–387 (FGLLSPLALSGCLMLLTALVV) traverse the membrane as a helical segment. Over 388-397 (AAKVRITPMS) the chain is Cytoplasmic.

Belongs to the major facilitator superfamily. DHA1 family. NepI (TC 2.A.1.2.26) subfamily.

It localises to the cell inner membrane. It catalyses the reaction inosine(in) + H(+)(out) = inosine(out) + H(+)(in). The enzyme catalyses guanosine(in) + H(+)(out) = guanosine(out) + H(+)(in). In terms of biological role, involved in the efflux of purine ribonucleosides, such as inosine and guanosine. The chain is Purine ribonucleoside efflux pump NepI from Salmonella enteritidis PT4 (strain P125109).